Consider the following 279-residue polypeptide: Tetra-spanning protein 1 (279 aa).

Transmembrane regions (helical) follow at residues Val25 to Ile45 and Ala50 to Leu70. Asn77 is a glycosylation site (N-linked (GlcNAc...) asparagine). Residues Tyr100–Ile122 form a helical membrane-spanning segment. A glycan (N-linked (GlcNAc...) asparagine) is linked at Asn143. A helical transmembrane segment spans residues Met172–Leu192. Positions Val260–Thr279 are disordered. A compositionally biased stretch (low complexity) spans Thr262–Thr279.

The protein belongs to the PER33/POM33 family. In terms of assembly, interacts with RTN1 and YOP1.

The protein localises to the golgi apparatus membrane. The protein resides in the endoplasmic reticulum membrane. It localises to the nucleus membrane. Its function is as follows. Required for the correct positioning of the cellular division plane by delimiting the actomyosin ring assembly at the cell equator. This Schizosaccharomyces pombe (strain 972 / ATCC 24843) (Fission yeast) protein is Tetra-spanning protein 1 (tts1).